The chain runs to 2250 residues: DNA polymerase epsilon catalytic subunit A (2250 aa).

3 disordered regions span residues 1–63, 235–259, and 1990–2010; these read MPSR…GTAA, NGHG…DKEP, and PGTE…KAAS. A compositionally biased stretch (gly residues) spans 32–41; it reads GGGGGGGGVA. Basic and acidic residues predominate over residues 249–259; sequence DDTKKKKDKEP. Residues 1990–2000 show a composition bias toward polar residues; it reads PGTEATSTMNP. Zn(2+) contacts are provided by Cys2118, Cys2121, Cys2156, and Cys2159. Residues 2118–2159 form a CysA-type zinc finger; it reads CKKCNAIRDVDLCRDPDRLPSVNPDSGEMLEPARKNWVCHKC. [4Fe-4S] cluster contacts are provided by Cys2190, Cys2193, Cys2205, and Cys2207. Positions 2190–2207 match the CysB motif motif; that stretch reads CLKCSQTKSDNLAATCKC.

Belongs to the DNA polymerase type-B family. In terms of assembly, heterotetramer. Consists of 4 subunits: POL2, DPB2, DPB3 and DPB4. The cofactor is [4Fe-4S] cluster.

The protein resides in the nucleus. It carries out the reaction DNA(n) + a 2'-deoxyribonucleoside 5'-triphosphate = DNA(n+1) + diphosphate. In terms of biological role, DNA polymerase II participates in chromosomal DNA replication. The sequence is that of DNA polymerase epsilon catalytic subunit A (POL2) from Cryptococcus neoformans var. neoformans serotype D (strain JEC21 / ATCC MYA-565) (Filobasidiella neoformans).